We begin with the raw amino-acid sequence, 475 residues long: tRNA-2-methylthio-N(6)-dimethylallyladenosine synthase (475 aa).

A compositionally biased stretch (basic and acidic residues) spans 1–10 (MQETTVKRDG). Positions 1 to 22 (MQETTVKRDGASPSDAGTPATT) are disordered. Residues 27 to 144 (GKLYIRTFGC…LPDLIKRRRA (118 aa)) form the MTTase N-terminal domain. Positions 36, 73, 107, 181, 185, and 188 each coordinate [4Fe-4S] cluster. The 234-residue stretch at 167–400 (RVDGATAFVS…QALINQQAAA (234 aa)) folds into the Radical SAM core domain. The 64-residue stretch at 403–466 (QGMIGTRQRV…TNSLRGRVAG (64 aa)) folds into the TRAM domain.

The protein belongs to the methylthiotransferase family. MiaB subfamily. As to quaternary structure, monomer. [4Fe-4S] cluster is required as a cofactor.

It localises to the cytoplasm. It catalyses the reaction N(6)-dimethylallyladenosine(37) in tRNA + (sulfur carrier)-SH + AH2 + 2 S-adenosyl-L-methionine = 2-methylsulfanyl-N(6)-dimethylallyladenosine(37) in tRNA + (sulfur carrier)-H + 5'-deoxyadenosine + L-methionine + A + S-adenosyl-L-homocysteine + 2 H(+). In terms of biological role, catalyzes the methylthiolation of N6-(dimethylallyl)adenosine (i(6)A), leading to the formation of 2-methylthio-N6-(dimethylallyl)adenosine (ms(2)i(6)A) at position 37 in tRNAs that read codons beginning with uridine. This is tRNA-2-methylthio-N(6)-dimethylallyladenosine synthase from Bordetella parapertussis (strain 12822 / ATCC BAA-587 / NCTC 13253).